A 449-amino-acid polypeptide reads, in one-letter code: Glucose-6-phosphate isomerase (449 aa).

The Proton donor role is filled by Glu-291. Catalysis depends on residues His-312 and Lys-426.

This sequence belongs to the GPI family.

Its subcellular location is the cytoplasm. The catalysed reaction is alpha-D-glucose 6-phosphate = beta-D-fructose 6-phosphate. Its pathway is carbohydrate biosynthesis; gluconeogenesis. It functions in the pathway carbohydrate degradation; glycolysis; D-glyceraldehyde 3-phosphate and glycerone phosphate from D-glucose: step 2/4. Its function is as follows. Catalyzes the reversible isomerization of glucose-6-phosphate to fructose-6-phosphate. The chain is Glucose-6-phosphate isomerase from Streptococcus equi subsp. zooepidemicus (strain MGCS10565).